Consider the following 976-residue polypeptide: Apical junction component 1 homolog (976 aa).

Positions 21 to 49 (ATPGPASKCSPCERSVARPAEPAPFNKRH) are disordered. Serine 52 is modified (phosphoserine). Disordered regions lie at residues 61 to 136 (GPAM…EPAY), 220 to 242 (PQFH…PTPS), and 264 to 294 (YAER…RGSF). The span at 98–113 (RAPPGLTPAPASPPVL) shows a compositional bias: pro residues. The span at 116–134 (RGREAQRAARAEASPRREP) shows a compositional bias: basic and acidic residues. Phosphoserine is present on serine 129. Position 322 is an omega-N-methylarginine (arginine 322). Residues 412 to 443 (LQVVPPSDPDPLLASWHGGTGTSPPRLATDSR) are disordered. Phosphoserine occurs at positions 468, 509, and 512. Disordered stretches follow at residues 539-574 (DLRA…SGRQ) and 614-660 (LDSR…ADED). Low complexity-rich tracts occupy residues 616–625 (SRPAGSGAPA) and 633–655 (PASA…SPEP). Position 749 is an asymmetric dimethylarginine; alternate (arginine 749). Residue arginine 749 is modified to Omega-N-methylarginine; alternate. A disordered region spans residues 855–888 (GSPARPPPARSREPDMETLILTPPPGTAGLDQDG).

The protein localises to the apical cell membrane. It localises to the cell projection. The protein resides in the cilium. Its subcellular location is the cell junction. It is found in the adherens junction. Functionally, may be involved in the control of adherens junction integrity. The polypeptide is Apical junction component 1 homolog (Homo sapiens (Human)).